Reading from the N-terminus, the 463-residue chain is Putative dipeptidase YtjP (463 aa).

Residue His85 coordinates Zn(2+). The active site involves Asp87. Asp116 is a Zn(2+) binding site. Glu150 acts as the Proton acceptor in catalysis. Zn(2+) contacts are provided by Glu151, Asp174, and His436.

Belongs to the peptidase M20A family. It depends on Zn(2+) as a cofactor.

The sequence is that of Putative dipeptidase YtjP (ytjP) from Bacillus subtilis (strain 168).